The primary structure comprises 385 residues: ATP phosphoribosyltransferase regulatory subunit (385 aa).

It belongs to the class-II aminoacyl-tRNA synthetase family. HisZ subfamily. As to quaternary structure, heteromultimer composed of HisG and HisZ subunits.

Its subcellular location is the cytoplasm. It functions in the pathway amino-acid biosynthesis; L-histidine biosynthesis; L-histidine from 5-phospho-alpha-D-ribose 1-diphosphate: step 1/9. In terms of biological role, required for the first step of histidine biosynthesis. May allow the feedback regulation of ATP phosphoribosyltransferase activity by histidine. This Bordetella avium (strain 197N) protein is ATP phosphoribosyltransferase regulatory subunit.